The sequence spans 729 residues: DNA topoisomerase 3 (729 aa).

The Toprim domain occupies 3-136 (KSVVIAEKPS…IKRLWISSVT (134 aa)). Mg(2+) is bound by residues Glu9 and Asp105. The Topo IA-type catalytic domain maps to 153–594 (YDNLYASAVA…EMKNYTKEIV (442 aa)). The interaction with DNA stretch occupies residues 187–192 (NCGRVQ). Tyr310 (O-(5'-phospho-DNA)-tyrosine intermediate) is an active-site residue. Positions 686-713 (ERRKKESGNKADKRDVQKYMKQQKKEEE) are enriched in basic and acidic residues. Positions 686–718 (ERRKKESGNKADKRDVQKYMKQQKKEEEPLNNP) are disordered.

Belongs to the type IA topoisomerase family. Mg(2+) serves as cofactor.

The enzyme catalyses ATP-independent breakage of single-stranded DNA, followed by passage and rejoining.. In terms of biological role, releases the supercoiling and torsional tension of DNA, which is introduced during the DNA replication and transcription, by transiently cleaving and rejoining one strand of the DNA duplex. Introduces a single-strand break via transesterification at a target site in duplex DNA. The scissile phosphodiester is attacked by the catalytic tyrosine of the enzyme, resulting in the formation of a DNA-(5'-phosphotyrosyl)-enzyme intermediate and the expulsion of a 3'-OH DNA strand. The free DNA strand then undergoes passage around the unbroken strand, thus removing DNA supercoils. Finally, in the religation step, the DNA 3'-OH attacks the covalent intermediate to expel the active-site tyrosine and restore the DNA phosphodiester backbone. The sequence is that of DNA topoisomerase 3 from Bacillus cereus (strain ZK / E33L).